A 157-amino-acid polypeptide reads, in one-letter code: Snaclec EMS16 subunit alpha (157 aa).

The N-terminal stretch at 1 to 23 is a signal peptide; that stretch reads MGRFISVSFGLLVVFLSLSGTGA. 3 cysteine pairs are disulfide-bonded: Cys27/Cys38, Cys55/Cys152, and Cys127/Cys144. Residues 34-153 form the C-type lectin domain; sequence YDQHCYLAIG…CEDLYPFVCK (120 aa).

Belongs to the snaclec family. Heterodimer of subunits A and B; disulfide-linked. As to expression, expressed by the venom gland.

Its subcellular location is the secreted. Its function is as follows. EMS16 is a potent and selective inhibitor of alpha-2/beta-1 (ITGA2/ITGB1) integrin and acts as a potent antagonist of platelet aggregation and cell migration. Binds specifically to the I domain of the alpha-2 subunit, in a metal ion-independent fashion. This Echis multisquamatus (Central Asian sand viper) protein is Snaclec EMS16 subunit alpha.